The following is a 697-amino-acid chain: PHD finger protein At1g33420 (697 aa).

The PHD-type zinc-finger motif lies at 603-653; sequence KVDCKCGTKDDDGERMLACDGCGVWHHTRCIGINNADALPSKFLCFRCIEL.

The protein localises to the nucleus. The protein is PHD finger protein At1g33420 of Arabidopsis thaliana (Mouse-ear cress).